The following is a 299-amino-acid chain: ATP phosphoribosyltransferase (299 aa).

The protein belongs to the ATP phosphoribosyltransferase family. Long subfamily. In terms of assembly, equilibrium between an active dimeric form, an inactive hexameric form and higher aggregates. Interconversion between the various forms is largely reversible and is influenced by the natural substrates and inhibitors of the enzyme. Mg(2+) is required as a cofactor.

It localises to the cytoplasm. The enzyme catalyses 1-(5-phospho-beta-D-ribosyl)-ATP + diphosphate = 5-phospho-alpha-D-ribose 1-diphosphate + ATP. Its pathway is amino-acid biosynthesis; L-histidine biosynthesis; L-histidine from 5-phospho-alpha-D-ribose 1-diphosphate: step 1/9. Feedback inhibited by histidine. Functionally, catalyzes the condensation of ATP and 5-phosphoribose 1-diphosphate to form N'-(5'-phosphoribosyl)-ATP (PR-ATP). Has a crucial role in the pathway because the rate of histidine biosynthesis seems to be controlled primarily by regulation of HisG enzymatic activity. The polypeptide is ATP phosphoribosyltransferase (Salmonella enteritidis PT4 (strain P125109)).